The sequence spans 384 residues: Acetylornithine aminotransferase (384 aa).

Residues Gly-94–Thr-95 and Phe-121 each bind pyridoxal 5'-phosphate. Arg-124 provides a ligand contact to N(2)-acetyl-L-ornithine. Asp-206–Gln-209 is a pyridoxal 5'-phosphate binding site. An N6-(pyridoxal phosphate)lysine modification is found at Lys-235. Residue Ser-263 participates in N(2)-acetyl-L-ornithine binding. A pyridoxal 5'-phosphate-binding site is contributed by Thr-264.

This sequence belongs to the class-III pyridoxal-phosphate-dependent aminotransferase family. ArgD subfamily. Homodimer. The cofactor is pyridoxal 5'-phosphate.

Its subcellular location is the cytoplasm. It carries out the reaction N(2)-acetyl-L-ornithine + 2-oxoglutarate = N-acetyl-L-glutamate 5-semialdehyde + L-glutamate. It participates in amino-acid biosynthesis; L-arginine biosynthesis; N(2)-acetyl-L-ornithine from L-glutamate: step 4/4. The protein is Acetylornithine aminotransferase of Listeria innocua serovar 6a (strain ATCC BAA-680 / CLIP 11262).